The following is a 218-amino-acid chain: MPGLTIGDTVPNLELDSTHGKIRIHDYVGNGYVILFSHPGDFTPVCTTELAAMANYAKEFEKRGVKLLGISCDDVQSHKEWTKDIEAYKPGSKVTYPIMADPDRSAIKQLNMVDPDEKDAQGQLPSRTLHIVGPDKVVKLSFLYPSCTGRNMDEVVRAVDSLLTAAKHKVATPANWKPGECVVIAPGVSDEEAKKMFPQGFETADLPSKKGYLRFTKV.

The 161-residue stretch at 4 to 164 (LTIGDTVPNL…VVRAVDSLLT (161 aa)) folds into the Thioredoxin domain. The Cysteine sulfenic acid (-SOH) intermediate role is filled by cysteine 46. Positions 194–217 (KKMFPQGFETADLPSKKGYLRFTK) match the Bipartite nuclear localization signal motif.

It belongs to the peroxiredoxin family. Prx6 subfamily. In terms of tissue distribution, embryo and aleurone cells.

Its subcellular location is the nucleus. The protein resides in the cytoplasm. The enzyme catalyses a hydroperoxide + [thioredoxin]-dithiol = an alcohol + [thioredoxin]-disulfide + H2O. Functionally, thiol-specific peroxidase that catalyzes the reduction of hydrogen peroxide and organic hydroperoxides to water and alcohols, respectively. Seems to contribute to the inhibition of germination during stress. The sequence is that of 1-Cys peroxiredoxin PER1 (PER1) from Hordeum vulgare (Barley).